The sequence spans 1511 residues: DNA-directed RNA polymerase subunit beta' (1511 aa).

Residues C75, C77, C90, and C93 each coordinate Zn(2+). D474, D476, and D478 together coordinate Mg(2+). Positions 804, 878, 885, and 888 each coordinate Zn(2+).

The protein belongs to the RNA polymerase beta' chain family. In terms of assembly, the RNAP catalytic core consists of 2 alpha, 1 beta, 1 beta' and 1 omega subunit. When a sigma factor is associated with the core the holoenzyme is formed, which can initiate transcription. It depends on Mg(2+) as a cofactor. The cofactor is Zn(2+).

It carries out the reaction RNA(n) + a ribonucleoside 5'-triphosphate = RNA(n+1) + diphosphate. In terms of biological role, DNA-dependent RNA polymerase catalyzes the transcription of DNA into RNA using the four ribonucleoside triphosphates as substrates. The polypeptide is DNA-directed RNA polymerase subunit beta' (Aliarcobacter butzleri (strain RM4018) (Arcobacter butzleri)).